Consider the following 470-residue polypeptide: ATP synthase subunit beta 2 (470 aa).

An ATP-binding site is contributed by Gly-155–Thr-162.

The protein belongs to the ATPase alpha/beta chains family. In terms of assembly, F-type ATPases have 2 components, CF(1) - the catalytic core - and CF(0) - the membrane proton channel. CF(1) has five subunits: alpha(3), beta(3), gamma(1), delta(1), epsilon(1). CF(0) has three main subunits: a(1), b(2) and c(9-12). The alpha and beta chains form an alternating ring which encloses part of the gamma chain. CF(1) is attached to CF(0) by a central stalk formed by the gamma and epsilon chains, while a peripheral stalk is formed by the delta and b chains.

It is found in the cell inner membrane. It catalyses the reaction ATP + H2O + 4 H(+)(in) = ADP + phosphate + 5 H(+)(out). In terms of biological role, produces ATP from ADP in the presence of a proton gradient across the membrane. The catalytic sites are hosted primarily by the beta subunits. The polypeptide is ATP synthase subunit beta 2 (Nitrosospira multiformis (strain ATCC 25196 / NCIMB 11849 / C 71)).